A 396-amino-acid chain; its full sequence is Subtelomeric hrmA-associated cluster protein AFUB_079040 (396 aa).

2 disordered regions span residues 1 to 32 (MANKKKPSIKKSVNEPNPHLKQSHASGSQQSL) and 347 to 396 (YPEN…ECGR). Positions 23–32 (SHASGSQQSL) are enriched in polar residues. Residues 367–380 (SKKKKDKKKKKSNK) show a composition bias toward basic residues.

Its function is as follows. Part of the subtelomeric hrmA-associated cluster (HAC) containing genes that alter the hyphal surface (such as reduced total chitin or increased beta-glucan exposure) and perturb inter-hyphal interactions within the developing biofilms, resulting in a loss of vertically aligned polarized growing filaments. Consequently, this hypoxia-typic morphotype (called H-MORPH) with altered biofilm architecture leads to increased hypoxia fitness, increased host inflammation, rapid disease progression, and mortality in a murine model of invasive aspergillosis. This Aspergillus fumigatus (strain CBS 144.89 / FGSC A1163 / CEA10) (Neosartorya fumigata) protein is Subtelomeric hrmA-associated cluster protein AFUB_079040.